Here is a 274-residue protein sequence, read N- to C-terminus: Shikimate dehydrogenase (NADP(+)) (274 aa).

Shikimate-binding positions include 14 to 16 (SQS) and Thr61. Lys65 serves as the catalytic Proton acceptor. Asn86 and Asp102 together coordinate shikimate. NADP(+) contacts are provided by residues 128–132 (GAGGA), 151–156 (NRTVEK), and Leu215. A shikimate-binding site is contributed by Tyr217. Residue Gly239 participates in NADP(+) binding.

It belongs to the shikimate dehydrogenase family. As to quaternary structure, homodimer.

The enzyme catalyses shikimate + NADP(+) = 3-dehydroshikimate + NADPH + H(+). It participates in metabolic intermediate biosynthesis; chorismate biosynthesis; chorismate from D-erythrose 4-phosphate and phosphoenolpyruvate: step 4/7. Involved in the biosynthesis of the chorismate, which leads to the biosynthesis of aromatic amino acids. Catalyzes the reversible NADPH linked reduction of 3-dehydroshikimate (DHSA) to yield shikimate (SA). The chain is Shikimate dehydrogenase (NADP(+)) from Proteus mirabilis (strain HI4320).